The following is a 1550-amino-acid chain: Cellulose synthase 1 (1550 aa).

Residues 1–741 are catalytic; that stretch reads MPEVRSSTQS…KERVLKGTVK (741 aa). 3 consecutive transmembrane segments (helical) span residues 26–46, 47–67, and 106–126; these read GAGL…TSVT, LPPE…FIVG, and GLLG…LFLS. A catalytic subdomain A region spans residues 147–240; that stretch reads EWPTVDIFVP…YILIFDCDHV (94 aa). Asp189 is a catalytic residue. Substrate contacts are provided by Asp236 and Asp238. Residues 317–377 form a catalytic subdomain B region; sequence TAIEQIGGFA…GQRVRWARGM (61 aa). Residue Asp333 is part of the active site. The next 5 helical transmembrane spans lie at 398 to 418, 423 to 443, 468 to 488, 507 to 527, and 547 to 567; these read LCYL…IFLS, FLFF…AYAI, VYET…LLSP, FDLG…GGLA, and LLNS…IAVG. In terms of domain architecture, PilZ spans 572-647; sequence QKRNSHRIPA…PARIIRAGNG (76 aa). 2 disordered regions span residues 708 to 731 and 768 to 813; these read VHRS…NPSR and APAH…QPLA. The tract at residues 742-1550 is cyclic di-GMP binding domain; that stretch reads MVSLLALLTF…KQLEDERRKS (809 aa). Residues 768-796 are compositionally biased toward low complexity; that stretch reads APAHQPEASDLPPLPALLPATSGAAQAGS. The helical transmembrane segment at 1513-1533 threads the bilayer; the sequence is VLLVGLLGCILIVSVLARALA.

In the N-terminal section; belongs to the glycosyltransferase 2 family. It in the C-terminal section; belongs to the AcsB/BcsB family. Mg(2+) serves as cofactor.

It is found in the cell inner membrane. The catalysed reaction is [(1-&gt;4)-beta-D-glucosyl](n) + UDP-alpha-D-glucose = [(1-&gt;4)-beta-D-glucosyl](n+1) + UDP + H(+). The protein operates within glycan metabolism; bacterial cellulose biosynthesis. In terms of biological role, bifunctional protein comprised of a catalytic subunit and a regulatory subunit. The catalytic subunit of cellulose synthase polymerizes uridine 5'-diphosphate glucose to cellulose in a processive way. The thick cellulosic mats generated by this enzyme probably provide a specialized protective environment to the bacterium. The regulatory subunit binds bis-(3'-5') cyclic diguanylic acid (c-di-GMP). The sequence is that of Cellulose synthase 1 (acsAB) from Novacetimonas hansenii (Komagataeibacter hansenii).